A 165-amino-acid chain; its full sequence is V-type proton ATPase subunit c2 (165 aa).

The Lumenal segment spans residues methionine 1–proline 12. The helical transmembrane segment at phenylalanine 13–glycine 33 threads the bilayer. Over threonine 34–serine 55 the chain is Cytoplasmic. A helical membrane pass occupies residues isoleucine 56–isoleucine 76. At serine 77–histidine 95 the chain is on the lumenal side. The helical transmembrane segment at leucine 96–glycine 117 threads the bilayer. The Cytoplasmic portion of the chain corresponds to aspartate 118 to lysine 129. A helical transmembrane segment spans residues leucine 130–leucine 155. At serine 156–glutamate 165 the chain is on the lumenal side.

The protein belongs to the V-ATPase proteolipid subunit family. In terms of assembly, V-ATPase is a heteromultimeric enzyme composed of a peripheral catalytic V1 complex (components A to H) attached to an integral membrane V0 proton pore complex (components: a, c, c'', d and e). The proteolipid components c and c'' are present as a hexameric ring that forms the proton-conducting pore. In terms of tissue distribution, expressed in leaf, root, flower and silique, with lower expression in roots.

Its subcellular location is the vacuole membrane. Proton-conducting pore forming subunit of the membrane integral V0 complex of vacuolar ATPase. V-ATPase is responsible for acidifying a variety of intracellular compartments in eukaryotic cells. The polypeptide is V-type proton ATPase subunit c2 (VHA-c2) (Arabidopsis thaliana (Mouse-ear cress)).